We begin with the raw amino-acid sequence, 234 residues long: tRNA1(Val) (adenine(37)-N6)-methyltransferase (234 aa).

This sequence belongs to the methyltransferase superfamily. tRNA (adenine-N(6)-)-methyltransferase family.

It is found in the cytoplasm. The catalysed reaction is adenosine(37) in tRNA1(Val) + S-adenosyl-L-methionine = N(6)-methyladenosine(37) in tRNA1(Val) + S-adenosyl-L-homocysteine + H(+). Its function is as follows. Specifically methylates the adenine in position 37 of tRNA(1)(Val) (anticodon cmo5UAC). This is tRNA1(Val) (adenine(37)-N6)-methyltransferase from Aliivibrio salmonicida (strain LFI1238) (Vibrio salmonicida (strain LFI1238)).